The sequence spans 332 residues: 3-dehydrosphinganine reductase (332 aa).

The N-terminal stretch at 1–25 (MLLVVAAFIVAFVLLLYMISPLISP) is a signal peptide. NADPH is bound by residues glycine 39, serine 41, serine 42, glycine 43, arginine 64, aspartate 65, lysine 68, and aspartate 93. The GXSXG signature appears at 39–43 (GGSSG). The active-site Proton donor is serine 172. Tyrosine 186 acts as the Proton acceptor in catalysis. Positions 186 and 190 each coordinate NADP(+). Lysine 190 (lowers pKa of active site Tyr) is an active-site residue.

The protein belongs to the short-chain dehydrogenases/reductases (SDR) family.

It is found in the endoplasmic reticulum. It carries out the reaction sphinganine + NADP(+) = 3-oxosphinganine + NADPH + H(+). The protein operates within lipid metabolism; sphingolipid metabolism. Its function is as follows. Catalyzes the reduction of 3'-oxosphinganine (3-ketodihydrosphingosine/KDS) to sphinganine (dihydrosphingosine/DHS), the second step of de novo sphingolipid biosynthesis. In Danio rerio (Zebrafish), this protein is 3-dehydrosphinganine reductase (kdsr).